The sequence spans 358 residues: Protein FAM50 homolog (358 aa).

Basic and acidic residues predominate over residues 104–113 (AKLAEKDRQK). The segment at 104-151 (AKLAEKDRQKRQIQALSFDPDDEPDGDDANDGDEGSGKESEKEDVKEE) is disordered. A compositionally biased stretch (acidic residues) spans 122 to 137 (DPDDEPDGDDANDGDE). The segment covering 138-151 (GSGKESEKEDVKEE) has biased composition (basic and acidic residues).

It belongs to the FAM50 family.

The sequence is that of Protein FAM50 homolog from Anopheles gambiae (African malaria mosquito).